The primary structure comprises 244 residues: Ribosome-inactivating protein cucurmosin (244 aa).

Catalysis depends on residues Tyr70, Tyr109, Glu158, and Arg161. N-linked (GlcNAc...) asparagine glycosylation is found at Asn189 and Asn225.

Belongs to the ribosome-inactivating protein family. Type 1 RIP subfamily. Post-translationally, the N-linked glycan consists of GlcNAc2Man3Xyl.

The catalysed reaction is Endohydrolysis of the N-glycosidic bond at one specific adenosine on the 28S rRNA.. Its function is as follows. Has cytotoxic activity towards cancer cells, but not normal cells. Inhibits the growth of the human leukemia cell line K562, the murine melanoma cell line B16 and the lung adenocarcinoma cell line A549 with IC(50) values of 88.1 nM, 63.4 nM and 359.3 nM respectively. This Cucurbita moschata (Winter crookneck squash) protein is Ribosome-inactivating protein cucurmosin.